A 372-amino-acid chain; its full sequence is Lipoyl synthase, mitochondrial (372 aa).

Residues 1-27 constitute a mitochondrion transit peptide; it reads MSLRCGGAVRTVGPRVFGRYVFSPVRE. 7 residues coordinate [4Fe-4S] cluster: cysteine 106, cysteine 111, cysteine 117, cysteine 137, cysteine 141, cysteine 144, and serine 352. The Radical SAM core domain occupies 122–341; that stretch reads EYATATATIM…EKVGNELGFH (220 aa).

The protein belongs to the radical SAM superfamily. Lipoyl synthase family. Requires [4Fe-4S] cluster as cofactor.

The protein resides in the mitochondrion. It carries out the reaction [[Fe-S] cluster scaffold protein carrying a second [4Fe-4S](2+) cluster] + N(6)-octanoyl-L-lysyl-[protein] + 2 oxidized [2Fe-2S]-[ferredoxin] + 2 S-adenosyl-L-methionine + 4 H(+) = [[Fe-S] cluster scaffold protein] + N(6)-[(R)-dihydrolipoyl]-L-lysyl-[protein] + 4 Fe(3+) + 2 hydrogen sulfide + 2 5'-deoxyadenosine + 2 L-methionine + 2 reduced [2Fe-2S]-[ferredoxin]. It participates in protein modification; protein lipoylation via endogenous pathway; protein N(6)-(lipoyl)lysine from octanoyl-[acyl-carrier-protein]: step 2/2. Its function is as follows. Catalyzes the radical-mediated insertion of two sulfur atoms into the C-6 and C-8 positions of the octanoyl moiety bound to the lipoyl domains of lipoate-dependent enzymes, thereby converting the octanoylated domains into lipoylated derivatives. The chain is Lipoyl synthase, mitochondrial from Bos taurus (Bovine).